Reading from the N-terminus, the 595-residue chain is P2X purinoceptor 7 (595 aa).

The Cytoplasmic portion of the chain corresponds to methionine 1–glutamine 22. Cysteine 4 is lipidated: S-palmitoyl cysteine. A helical membrane pass occupies residues serine 23–methionine 46. Residues serine 47–phenylalanine 328 are Extracellular-facing. An N-linked (GlcNAc...) asparagine glycan is attached at asparagine 74. Cystine bridges form between cysteine 119–cysteine 168, cysteine 129–cysteine 152, and cysteine 135–cysteine 162. Arginine 125 bears the ADP-ribosylarginine mark. Asparagine 187 carries N-linked (GlcNAc...) asparagine glycosylation. Residue threonine 189 participates in ATP binding. N-linked (GlcNAc...) asparagine glycosylation is found at asparagine 202 and asparagine 213. A disulfide bond links cysteine 216 and cysteine 226. N-linked (GlcNAc...) asparagine glycosylation is present at asparagine 241. A disulfide bridge links cysteine 260 with cysteine 269. N-linked (GlcNAc...) asparagine glycosylation occurs at asparagine 284. ATP contacts are provided by arginine 294 and lysine 311. The chain crosses the membrane as a helical span at residues aspartate 329–leucine 353. A Na(+)-binding site is contributed by serine 342. The Cytoplasmic portion of the chain corresponds to isoleucine 354–tyrosine 595. The tract at residues serine 360–cysteine 377 is C-cys anchor. Residues cysteine 362, cysteine 363, cysteine 374, and cysteine 377 are each lipidated (S-palmitoyl cysteine). The interval lysine 395–tyrosine 595 is cytoplasmic ballast. 3 residues coordinate Zn(2+): cysteine 479, cysteine 499, and cysteine 506. Positions 546, 547, 550, and 567 each coordinate GTP. Cysteine 572 lines the Zn(2+) pocket. The GTP site is built by lysine 583, serine 589, and glycine 590.

The protein belongs to the P2X receptor family. In terms of assembly, homotrimer. Interacts with LAMA3, ITGB2, ACTB, ACTN4, SVIL, MPP3, HSPA1, HSPCB, HSPA8, PIK230 and PTPRB. Interacts (via C-terminus) with EMP2. In terms of processing, phosphorylation results in its inactivation. ADP-ribosylation at Arg-125 is necessary and sufficient to activate P2RX7 and gate the channel. Post-translationally, palmitoylation of several cysteines in the C-terminal cytoplasmic tail is required for efficient localization to cell surface. Palmitoylation prevents channel desensitization by physically anchoring the palmitoylated groups to the membrane.

The protein resides in the cell membrane. The enzyme catalyses Ca(2+)(in) = Ca(2+)(out). It carries out the reaction K(+)(in) = K(+)(out). The catalysed reaction is Na(+)(in) = Na(+)(out). With respect to regulation, activated by high extracellular ATP levels (0.1-2.5 mM). The synthetic analog 2'(3')-O-(4-benzoylbenzoyl)ATP (BzATP) acts as a potent agonist. Does not undergo desensitization, instead, undergoes a facilitation process where currents progressively increase with repetitive or prolonged agonist application. Palmitoylation prevents channel desensitization. The permeability of the P2RX7 channel is modulated by the amount of cholesterol in the plasma membrane. Functionally, ATP-gated nonselective transmembrane cation channel that requires high millimolar concentrations of ATP for activation. Upon ATP binding, it rapidly opens to allow the influx of small cations Na(+) and Ca(2+), and the K(+) efflux. Also has the ability to form a large pore in the cell membrane, allowing the passage of large cationic molecules. In microglia, may mediate the transmembrane transport of exogenous NADPH. In immune cells, P2RX7 acts as a molecular sensor in pathological inflammatory states by detecting and responding to high local concentrations of extracellar ATP. In microglial cells, P2RX7 activation leads to the release of pro-inflammatory cytokines, such as IL-1beta and IL-18, through the activation of the NLRP3 inflammasome and caspase-1. Cooperates with KCNK6 to activate NLRP3 inflammasome. Activates death pathways leading to apoptosis and autophagy. Activates death pathways leading to pyroptosis. In terms of biological role, has a higher affinity for ATP, slower deactivation and an increased propensity to form large cation-permeable pores. The sequence is that of P2X purinoceptor 7 (P2rx7) from Rattus norvegicus (Rat).